We begin with the raw amino-acid sequence, 143 residues long: Ribosome-binding factor A (143 aa).

Positions 123-143 are disordered; that stretch reads DKSLQENYKQNDKETKAEKLR.

This sequence belongs to the RbfA family. In terms of assembly, monomer. Binds 30S ribosomal subunits, but not 50S ribosomal subunits or 70S ribosomes.

Its subcellular location is the cytoplasm. One of several proteins that assist in the late maturation steps of the functional core of the 30S ribosomal subunit. Associates with free 30S ribosomal subunits (but not with 30S subunits that are part of 70S ribosomes or polysomes). Required for efficient processing of 16S rRNA. May interact with the 5'-terminal helix region of 16S rRNA. The protein is Ribosome-binding factor A of Francisella tularensis subsp. mediasiatica (strain FSC147).